Reading from the N-terminus, the 251-residue chain is Small ribosomal subunit protein uS2 (251 aa).

The protein belongs to the universal ribosomal protein uS2 family.

This chain is Small ribosomal subunit protein uS2, found in Nitrosomonas europaea (strain ATCC 19718 / CIP 103999 / KCTC 2705 / NBRC 14298).